Consider the following 68-residue polypeptide: Conotoxin Mi11.1 (68 aa).

An N-terminal signal peptide occupies residues 1–26; sequence MMLRLTSVSCFLLVIACLNLFQVVLT. 4 disulfide bridges follow: Cys-29/Cys-43, Cys-36/Cys-48, Cys-42/Cys-52, and Cys-47/Cys-56. Tyr-60 is modified (tyrosine amide). Residues 64–68 constitute a propeptide that is removed on maturation; that stretch reads ATFQE.

The protein belongs to the conotoxin I2 superfamily. In terms of tissue distribution, expressed by the venom duct.

The protein localises to the secreted. The polypeptide is Conotoxin Mi11.1 (Conus miles (Soldier cone)).